A 275-amino-acid polypeptide reads, in one-letter code: Transcription factor JUNGBRUNNEN 1 (275 aa).

Residues 1 to 24 (MSGEGNLGKDHEEENEAPLPGFRF) form a disordered region. The NAC domain occupies 18-167 (PLPGFRFHPT…VWTLCRIFKR (150 aa)). Residues 115–173 (VGLKKSLVYYLGSAGKGTKTDWMMHEFRLPSTTKTDSPAQQAEVWTLCRIFKRVTSQRN) mediate DNA binding. A disordered region spans residues 191 to 219 (CSKTSSLDSDHTSHRTVDSMSHEPPLPQP). The segment covering 198-211 (DSDHTSHRTVDSMS) has biased composition (basic and acidic residues).

As to expression, expressed in roots, root caps, cotyledons, tips and margin of young leaves, senescent regions of fully expanded leaves and floral tissues, including old sepals, petals, staments, mature anthers and pollen grains. Not detected in the abscission zone of open flowers, emerging lateral roots and root meristematic zones.

Its subcellular location is the nucleus. In terms of biological role, transcription factor that binds to the 5'- RRYGCCGT-3' consensus core sequence. Central longevity regulator. Negative regulator of leaf senescence. Modulates cellular H(2)O(2) levels and enhances tolerance to various abiotic stresses through the regulation of DREB2A. This chain is Transcription factor JUNGBRUNNEN 1 (JUB1), found in Arabidopsis thaliana (Mouse-ear cress).